A 134-amino-acid polypeptide reads, in one-letter code: Large ribosomal subunit protein uL16c (134 aa).

The tract at residues 1-21 (MLSPKRTKYRKHHRGRMRGKA) is disordered.

Belongs to the universal ribosomal protein uL16 family. As to quaternary structure, part of the 50S ribosomal subunit.

The protein localises to the plastid. It is found in the chloroplast. The protein is Large ribosomal subunit protein uL16c of Chlorella vulgaris (Green alga).